The chain runs to 464 residues: Juvenile hormone epoxide hydrolase 1 (464 aa).

The chain crosses the membrane as a helical span at residues 7–27; it reads MLIFAAIAGIAVLYYQITKEL. Asp224 acts as the Nucleophile in catalysis. Tyr370 functions as the Proton donor in the catalytic mechanism. Residue His427 is the Proton acceptor of the active site.

The protein belongs to the peptidase S33 family. Developing oocytes, fat body and midgut epithelium of adults.

It is found in the microsome membrane. The protein resides in the endoplasmic reticulum membrane. It catalyses the reaction cis-stilbene oxide + H2O = (1R,2R)-hydrobenzoin. The catalysed reaction is 1-(4-methoxyphenyl)-N-methyl-N-[(3-methyloxetan-3-yl)methyl]methanamine + H2O = 2-{[(4-methoxybenzyl)(methyl)amino]methyl}-2-methylpropane-1,3-diol. Functionally, catalyzes juvenile hormone hydrolysis. This Ctenocephalides felis (Cat flea) protein is Juvenile hormone epoxide hydrolase 1.